Reading from the N-terminus, the 358-residue chain is Dynein axonemal assembly factor 10 (358 aa).

WD repeat units follow at residues 63-105 (EKKH…QPVF), 109-154 (AHAS…APVA), 162-205 (NNVR…VRWE), 207-249 (NVRN…PKKG), 258-298 (TAGA…QRKV), and 320-358 (ISTQ…LNKV).

As to quaternary structure, interacts with PIH1D1; the interaction associates DNAAF10 with the R2TP complex. Interacts with several dynein axonemal assembly factors.

The protein localises to the dynein axonemal particle. Its function is as follows. Key assembly factor specifically required for the stability of axonemal dynein heavy chains in cytoplasm. The chain is Dynein axonemal assembly factor 10 (dnaaf10) from Chlamydomonas reinhardtii (Chlamydomonas smithii).